Here is a 292-residue protein sequence, read N- to C-terminus: MWIPYDLRASLKGETDRETLRLSRADGQPRQFLVGFFLRNPVTQAWELDLAAEDGLPELPAVPAGASFSICPNEAGKLAEVIYRLPARSATEALELAHADLQPRLLAWLARVGRGMAIAGWRVADMTHRARWRSTPFRPSAMSLDFALAPVDRDLAPVVELFQRARNAPDPASRLLAAFAVLSAAVGHPAMAGSGAATLSITQDMLIHSGAIVLPDPLMGIALADLIALLRPEHDRLVGRDGVLLPVLDDLAGQKRLSLLANLADLVAHRLIQAELAARHRDAPAPAMAAGA.

It participates in one-carbon metabolism; methylamine degradation. The chain is Methylamine utilization protein MauJ (mauJ) from Paracoccus versutus (Thiobacillus versutus).